We begin with the raw amino-acid sequence, 388 residues long: Mannitol-1-phosphate 5-dehydrogenase (388 aa).

NAD(+) is bound at residue 5-16 (AVHFGGGNIGRG). The active site involves K213.

Belongs to the mannitol dehydrogenase family. Monomer.

It catalyses the reaction D-mannitol 1-phosphate + NAD(+) = beta-D-fructose 6-phosphate + NADH + H(+). Its function is as follows. Catalyzes the NAD(H)-dependent interconversion of D-fructose 6-phosphate and D-mannitol 1-phosphate in the mannitol metabolic pathway. The polypeptide is Mannitol-1-phosphate 5-dehydrogenase (Penicillium rubens (strain ATCC 28089 / DSM 1075 / NRRL 1951 / Wisconsin 54-1255) (Penicillium chrysogenum)).